Here is a 339-residue protein sequence, read N- to C-terminus: MKALSFEAPGEAVFGTREVPVPAPGEALIHLGYNSICGSDLSLYRGVWHGFSYPVVPGHEWSGTVVEVNGPGAELVGRDVVGDLTCACGSCAACGRGTPVLCENLQELGFTRDGACAEYMTIPTGNLHVLPEGLSLRAACQVEPVAVALHAVSTVGVEPGERVAVLGAGGIGLMLMQVARQRGGVITTVGEPVAERRAVAAQLGARTVTTGRPGELAELVAKHPDLTPDVVLEASGYPVAVQEAIEVVRPGGRIGLVGYRVEEVGPMATHHVAVKALTIRGSLGPGGRFPEAIDLLARGEIEVEPLLSHEFALDDHARALDLALRRAEGNVRSFFNLRA.

Zn(2+) is bound by residues cysteine 37, histidine 59, cysteine 88, cysteine 91, cysteine 94, cysteine 102, and glutamate 143.

This sequence belongs to the zinc-containing alcohol dehydrogenase family. DOIA dehydrogenase subfamily. Zn(2+) serves as cofactor.

It catalyses the reaction 2-deoxy-scyllo-inosamine + NADP(+) = 3-amino-2,3-dideoxy-scyllo-inosose + NADPH + H(+). It carries out the reaction 2-deoxy-scyllo-inosamine + NAD(+) = 3-amino-2,3-dideoxy-scyllo-inosose + NADH + H(+). Its pathway is metabolic intermediate biosynthesis; 2-deoxystreptamine biosynthesis; 2-deoxystreptamine from D-glucose 6-phosphate: step 3/4. The protein operates within antibiotic biosynthesis; tobramycin biosynthesis. In terms of biological role, catalyzes the oxidation of 2-deoxy-scyllo-inosamine (DOIA) with NAD(+) or NADP(+), forming 3-amino-2,3-dideoxy-scyllo-inosose (amino-DOI). The polypeptide is 2-deoxy-scyllo-inosamine dehydrogenase (tobE) (Streptoalloteichus tenebrarius (strain ATCC 17920 / DSM 40477 / JCM 4838 / CBS 697.72 / NBRC 16177 / NCIMB 11028 / NRRL B-12390 / A12253. 1 / ISP 5477) (Streptomyces tenebrarius)).